The following is a 2014-amino-acid chain: Leucine-rich repeat serine/threonine-protein kinase 1 (2014 aa).

5 ANK repeats span residues 51–81, 86–116, 119–148, 152–182, and 193–222; these read QCPSMEEIHTAYKQRNLSRARDLLRGVCEES, EKGQLLSIAAAHGDLETVQFLLTEKRVELPT, TDDNPAVVAAHFGHAEVVRELLESLPGPCT, LLNWMLALACQRGHLEVVKLLVLTHGADPEN, and IVRLPLYAAIKAGNEDIAIFLLRHGAYFCS. LRR repeat units follow at residues 279–300, 303–324, 330–351, 353–374, 381–402, 405–426, 427–447, 451–472, 474–495, 498–519, 549–570, 572–594, and 596–617; these read QITELDLSANCLPSLPSIIPWG, NLKKLNLSNNQLGELPCVQSSD, RLLEIDISSNKLSHLPPGFLHL, KLQKLTASKNYLERLFEEENAT, KLQELDLADNRLTELPVQFMHS, SLTSLNVSRNNLKSFPDPWSCP, LKCCKASKNALESLPDKMAVF, HLRDADFSENSLKEVPLGLFQL, ALMFLRLQGNQLLSLPPQEKWT, QLKTLDLSRNQLGKNEDGLKTK, SLEVLCLNDNHLDAVPPSVCLL, NLSELYLGNNPGLRELPPELGQL, and NLWQLDIEDLNISNVPAEVRKE. A Roc domain is found at 632 to 826; it reads KAEKCKLMKM…QLIFHVTCNM (195 aa). GDP is bound by residues proline 647, arginine 648, glycine 650, lysine 651, serine 652, threonine 653, glutamate 670, histidine 758, aspartate 760, cysteine 806, and lysine 807. One can recognise a COR domain in the interval 840 to 1237; that stretch reads GRLIPRSYIS…PARLFLENSK (398 aa). Position 1061 is a phosphothreonine (threonine 1061). Residues serine 1064 and serine 1074 each carry the phosphoserine modification. Threonine 1075 is modified (phosphothreonine). In terms of domain architecture, Protein kinase spans 1242–1525; sequence EGENSILGQG…VVSQMKDPTF (284 aa). ATP is bound by residues 1248–1256 and lysine 1270; that span reads LGQGGSGTV. Catalysis depends on aspartate 1386, which acts as the Proton acceptor. WD repeat units lie at residues 1539–1579, 1582–1622, 1623–1668, 1693–1729, 1730–1778, 1779–1948, and 1950–1986; these read AFFS…RMTC, MKLS…QALD, TPAV…SCSY, VKAMEVVNSGSEVWYSNGPGLLVIDCTILDISRRLEP, YAAP…YFCG, DPNP…AVLK, and RELNRHGVLVDAAVVAKDTVVCSFANENTEWCLAVWR. The interval 1791-1906 is WD40 loop; involved in dimer stabilization; the sequence is PSVLETPGSH…MDGETFSQHL (116 aa). The interval 1839–1895 is disordered; the sequence is SMSSYSSSPPHQDPRSPSSLPSSLTSYSSVPFSANYEDSDRLQEPSVTSDRTEHDLS. Over residues 1853–1871 the composition is skewed to low complexity; sequence RSPSSLPSSLTSYSSVPFS.

This sequence belongs to the protein kinase superfamily. TKL Ser/Thr protein kinase family. ROCO subfamily. As to quaternary structure, homodimer. The homodimer is autoinhibited and stabilized by its N-terminal residues and ANK repeats. Interacts with CSK. It depends on Mg(2+) as a cofactor. The cofactor is Mn(2+). In terms of processing, autophosphorylated. Autophosphorylation in inhibited in its dimeric state. Phosphorylated by protein kinase C isozymes PRKCA, PRKCB, PRKCG, PRKCE, PRKCZ and PRKCT at Ser-1064, Ser-1074 and Thr-1075. Phosphorylation at these residues activates the kinase activity of LRRK1 to phosphorylate RAB7A. In terms of tissue distribution, expressed in osteoclasts and bone marrow stromal cells.

It localises to the cytoplasm. The protein resides in the cell membrane. It catalyses the reaction L-seryl-[protein] + ATP = O-phospho-L-seryl-[protein] + ADP + H(+). The catalysed reaction is L-threonyl-[protein] + ATP = O-phospho-L-threonyl-[protein] + ADP + H(+). Activated by phosphorylation by PKC. Binds both GTP and GDP; binding of GTP stimulates kinase activity. Sterically autoinhibited in its dimeric state. In terms of biological role, serine/threonine-protein kinase which phosphorylates RAB proteins involved in intracellular trafficking. Phosphorylates RAB7A; this activity is dependent on protein kinase C (PKC) activation. Plays a role in the negative regulation of bone mass, acting through the maturation of osteoclasts. The polypeptide is Leucine-rich repeat serine/threonine-protein kinase 1 (Mus musculus (Mouse)).